The sequence spans 207 residues: Small ribosomal subunit protein uS4c (207 aa).

The 62-residue stretch at 92 to 153 (MRLDNILFRL…PKTYQSILSK (62 aa)) folds into the S4 RNA-binding domain.

Belongs to the universal ribosomal protein uS4 family. In terms of assembly, part of the 30S ribosomal subunit. Contacts protein S5. The interaction surface between S4 and S5 is involved in control of translational fidelity.

The protein localises to the plastid. Its subcellular location is the chloroplast. One of the primary rRNA binding proteins, it binds directly to 16S rRNA where it nucleates assembly of the body of the 30S subunit. Functionally, with S5 and S12 plays an important role in translational accuracy. This is Small ribosomal subunit protein uS4c (rps4) from Equisetum laevigatum (Smooth horsetail).